The sequence spans 147 residues: MRKLALDLGTKSCGFAISDLLGIIASGLDNFIYEENDFTAVLAKIDEIMINYHHEIDTIVLGYPTNVYDGSKNERTYLIESFYALLKQHFLNHEKIKIVYEDERFSTKIATQRLKNSCVKAAKIKKVKDKMSAVVILESYLSKNHFN.

The protein belongs to the YqgF nuclease family.

The protein resides in the cytoplasm. Could be a nuclease involved in processing of the 5'-end of pre-16S rRNA. The polypeptide is Putative pre-16S rRNA nuclease (Ureaplasma parvum serovar 3 (strain ATCC 27815 / 27 / NCTC 11736)).